Here is a 101-residue protein sequence, read N- to C-terminus: Protamine-3 (101 aa).

The tract at residues Met1 to Ser101 is disordered. Residues Glu45–Gln67 are compositionally biased toward acidic residues. Residue Ser93 is modified to Phosphoserine.

The protein belongs to the protamine P3 family. As to expression, testis.

It localises to the nucleus. It is found in the chromosome. Its function is as follows. Protamines substitute for histones in the chromatin of sperm during the haploid phase of spermatogenesis. They compact sperm DNA into a highly condensed, stable and inactive complex. The polypeptide is Protamine-3 (Prm3) (Mus musculus (Mouse)).